Consider the following 380-residue polypeptide: Glucose-1-phosphate adenylyltransferase (380 aa).

Alpha-D-glucose 1-phosphate contacts are provided by residues Tyr-99, Gly-164, 179-180, and Ser-190; that span reads EK.

This sequence belongs to the bacterial/plant glucose-1-phosphate adenylyltransferase family. As to quaternary structure, homotetramer.

It carries out the reaction alpha-D-glucose 1-phosphate + ATP + H(+) = ADP-alpha-D-glucose + diphosphate. The protein operates within glycan biosynthesis; glycogen biosynthesis. In terms of biological role, involved in the biosynthesis of ADP-glucose, a building block required for the elongation reactions to produce glycogen. Catalyzes the reaction between ATP and alpha-D-glucose 1-phosphate (G1P) to produce pyrophosphate and ADP-Glc. This Bacillus subtilis (strain 168) protein is Glucose-1-phosphate adenylyltransferase.